We begin with the raw amino-acid sequence, 875 residues long: Receptor-like protein 33 (875 aa).

The first 23 residues, 1–23 (MSLIPITFYFLFLFFSNFRGVFA), serve as a signal peptide directing secretion. The Extracellular segment spans residues 24–822 (VPNIHLCHFE…GESETLESEQ (799 aa)). 5 N-linked (GlcNAc...) asparagine glycosylation sites follow: Asn65, Asn103, Asn133, Asn146, and Asn181. 10 LRR repeats span residues 110-133 (FHFL…SIGN), 134-157 (LSHL…SLGN), 159-182 (FHLT…LGNL), 183-205 (SYLT…SFGS), 206-230 (LNQL…VINL), 231-254 (TKLS…ITSL), 256-278 (ILES…LFTI), 280-302 (SITL…NISS), 303-327 (PSNL…ISRL), and 329-351 (NLRT…IFSH). Asn229 and Asn250 each carry an N-linked (GlcNAc...) asparagine glycan. Asn299 is a glycosylation site (N-linked (GlcNAc...) asparagine). Residues 352 to 377 (LKLLGNLYLSHSNTTTTIDLNAVLSC) form an LRR 11; degenerate repeat. Residues Asn364, Asn395, and Asn411 are each glycosylated (N-linked (GlcNAc...) asparagine). LRR repeat units lie at residues 378–401 (FKML…SVSD), 404–427 (LGLI…LRTQ), 428–451 (RQMR…LLLQ), 455–477 (MHIS…TVVP), 479–502 (PSMK…ICSL), 503–528 (RSLI…KFKS), 530–549 (LSDL…KTII), 550–573 (KSLR…LIHF), 575–596 (TLEV…WLSS), 597–619 (LKKL…KTRF), 620–643 (PKLR…CFVE), 686–710 (LKIY…IGLL), 711–734 (KELH…MGNL), 735–758 (RELE…LGNL), and 760–783 (YLAY…QFRT). N-linked (GlcNAc...) asparagine glycosylation is found at Asn490 and Asn514. The N-linked (GlcNAc...) asparagine glycan is linked to Asn587. Asn633 carries N-linked (GlcNAc...) asparagine glycosylation. Residues Asn717, Asn757, and Asn765 are each glycosylated (N-linked (GlcNAc...) asparagine). Residues 823–843 (VLSWIAAAIGFTPGIVLGLTI) form a helical membrane-spanning segment. At 844-875 (GHIVLSSKPRWFFKVLYINNSRRRRRTRSEKS) the chain is on the cytoplasmic side.

This sequence belongs to the RLP family.

It localises to the cell membrane. This is Receptor-like protein 33 from Arabidopsis thaliana (Mouse-ear cress).